A 542-amino-acid polypeptide reads, in one-letter code: Chaperonin GroEL 3 (542 aa).

ATP-binding positions include 29-32 (TLGP), 86-90 (DGTTT), Gly-413, 477-479 (NAA), and Asp-493.

This sequence belongs to the chaperonin (HSP60) family. In terms of assembly, forms a cylinder of 14 subunits composed of two heptameric rings stacked back-to-back. Interacts with the co-chaperonin GroES.

The protein localises to the cytoplasm. The enzyme catalyses ATP + H2O + a folded polypeptide = ADP + phosphate + an unfolded polypeptide.. Its function is as follows. Together with its co-chaperonin GroES, plays an essential role in assisting protein folding. The GroEL-GroES system forms a nano-cage that allows encapsulation of the non-native substrate proteins and provides a physical environment optimized to promote and accelerate protein folding. This is Chaperonin GroEL 3 from Frankia alni (strain DSM 45986 / CECT 9034 / ACN14a).